The primary structure comprises 117 residues: Transcription elongation factor SPT4 (117 aa).

The interval 1-40 (MALETVPKDLRHLRACLLCSLVKTIDQFEYDGCDNCDAYL) is interaction with SUPT5H. The C4-type zinc-finger motif lies at 16-36 (CLLCSLVKTIDQFEYDGCDNC).

The protein belongs to the SPT4 family. As to quaternary structure, interacts with SUPT5H to form the DSIF complex. DSIF interacts with RNA polymerase II and with the positive transcription elongation factor b complex (P-TEFb complex), which is composed of CDK9 and cyclin-T.

It is found in the nucleus. Its function is as follows. May function as a component of the DRB sensitivity-inducing factor complex (DSIF complex), which regulates transcription elongation by RNA polymerase II. Probably enhances transcriptional pausing at sites proximal to the promoter, which may in turn facilitate the assembly of an elongation competent RNA polymerase II complex. This Xenopus laevis (African clawed frog) protein is Transcription elongation factor SPT4 (supt4h1).